Consider the following 83-residue polypeptide: Small ribosomal subunit protein bS16 (83 aa).

This sequence belongs to the bacterial ribosomal protein bS16 family.

This chain is Small ribosomal subunit protein bS16, found in Azoarcus sp. (strain BH72).